The following is a 261-amino-acid chain: RING finger and CHY zinc finger domain-containing protein 1 (261 aa).

A CHY-type zinc finger spans residues 13–80; that stretch reads LAQGPRGCEH…AQQTCEDCST (68 aa). Zn(2+)-binding residues include cysteine 20, histidine 22, cysteine 33, cysteine 34, cysteine 40, cysteine 43, histidine 44, histidine 50, cysteine 62, cysteine 65, cysteine 75, cysteine 78, cysteine 87, cysteine 90, histidine 101, cysteine 102, cysteine 105, cysteine 108, histidine 118, cysteine 119, cysteine 122, cysteine 125, histidine 134, and cysteine 136. The CTCHY-type zinc-finger motif lies at 82-144; it reads FGEYYCSICH…KCIENVSRQN (63 aa). The RING-type zinc-finger motif lies at 145 to 189; it reads CPICLEDIHTSRVVAHVLPCGHLLHRTCYEEMLKEGYRCPLCMHS.

As to quaternary structure, monomer and homodimer. Interacts with AR, MDM2, KAT5, PLAG1, PLAGL2, COPE, UBE2D2 and GORAB/NTKLBP1. Post-translationally, subject to ubiquitination and proteasomal degradation. Interaction with PLAGL2 or KAT5 enhances protein stability. As to expression, detected in testis, liver, kidney and heart.

It is found in the nucleus. The protein resides in the nucleus speckle. It localises to the cytoplasm. The enzyme catalyses S-ubiquitinyl-[E2 ubiquitin-conjugating enzyme]-L-cysteine + [acceptor protein]-L-lysine = [E2 ubiquitin-conjugating enzyme]-L-cysteine + N(6)-ubiquitinyl-[acceptor protein]-L-lysine.. It functions in the pathway protein modification; protein ubiquitination. E3 ubiquitin-protein ligase that mediates ubiquitination of target proteins, including p53/TP53, TP73, HDAC1 and CDKN1B. Mediates ubiquitination and degradation of p53/TP53; preferentially acts on tetrameric p53/TP53. Catalyzes monoubiquitinates the translesion DNA polymerase POLH. Involved in the ribosome-associated quality control (RQC) pathway, which mediates the extraction of incompletely synthesized nascent chains from stalled ribosomes: RCHY1 acts downstream of NEMF and recognizes CAT tails associated with stalled nascent chains, leading to their ubiquitination and degradation. This is RING finger and CHY zinc finger domain-containing protein 1 (Rchy1) from Mus musculus (Mouse).